A 221-amino-acid chain; its full sequence is Epididymal secretory glutathione peroxidase (221 aa).

A signal peptide spans 1-21 (MVTELRVFYLVPLLLASYVQT). Cys73 is an active-site residue.

The protein belongs to the glutathione peroxidase family. As to expression, epididymis.

It is found in the secreted. The catalysed reaction is 2 glutathione + H2O2 = glutathione disulfide + 2 H2O. Its function is as follows. Protects cells and enzymes from oxidative damage, by catalyzing the reduction of hydrogen peroxide, lipid peroxides and organic hydroperoxide, by glutathione. May constitute a glutathione peroxidase-like protective system against peroxide damage in sperm membrane lipids. The protein is Epididymal secretory glutathione peroxidase (Gpx5) of Mus musculus (Mouse).